Consider the following 135-residue polypeptide: Large ribosomal subunit protein bL17 (135 aa).

The protein belongs to the bacterial ribosomal protein bL17 family. As to quaternary structure, part of the 50S ribosomal subunit. Contacts protein L32.

The chain is Large ribosomal subunit protein bL17 from Listeria monocytogenes serotype 4b (strain CLIP80459).